We begin with the raw amino-acid sequence, 193 residues long: Putative manganese efflux pump MntP (193 aa).

The next 6 helical transmembrane spans lie at L8–L28, L37–F57, F61–G81, M109–I129, P138–I158, and L172–L192.

The protein belongs to the MntP (TC 9.B.29) family.

The protein localises to the cell inner membrane. Its function is as follows. Probably functions as a manganese efflux pump. The sequence is that of Putative manganese efflux pump MntP from Bacteroides thetaiotaomicron (strain ATCC 29148 / DSM 2079 / JCM 5827 / CCUG 10774 / NCTC 10582 / VPI-5482 / E50).